A 123-amino-acid polypeptide reads, in one-letter code: Large ribosomal subunit protein bL19 (123 aa).

Belongs to the bacterial ribosomal protein bL19 family.

In terms of biological role, this protein is located at the 30S-50S ribosomal subunit interface and may play a role in the structure and function of the aminoacyl-tRNA binding site. The protein is Large ribosomal subunit protein bL19 of Ureaplasma parvum serovar 3 (strain ATCC 27815 / 27 / NCTC 11736).